A 72-amino-acid chain; its full sequence is Disintegrin cereberin (72 aa).

The Disintegrin domain maps to E1 to H72. Intrachain disulfides connect C6-C21, C8-C16, C15-C38, C29-C35, C34-C59, and C47-C66. Residues R51–D53 carry the Cell attachment site motif. Residues R51–H72 are disordered.

Belongs to the venom metalloproteinase (M12B) family. P-II subfamily. P-IIa sub-subfamily. Monomer (disintegrin). As to expression, expressed by the venom gland.

It is found in the secreted. Inhibits fibrinogen interaction with platelet. Acts by binding to alpha-IIb/beta-3 (ITGA2B/ITGB3) on the platelet surface and inhibits aggregation induced by ADP, thrombin, platelet-activating factor and collagen. The sequence is that of Disintegrin cereberin from Crotalus cerberus (Arizona black rattlesnake).